The following is a 336-amino-acid chain: MSALNKKSFLTYLKEGGIYVVLLVLLAIIIFQDPTFLSLLNLSNILTQSSVRIIIALGVAGLIVTQGTDLSAGRQVGLAAVVAATLLQSMDNANKVFPEMATMPIALVILIVCAIGAVIGLINGLIIAYLNVTPFITTLGTMIIVYGINSLYYDFVGASPISGFDSGFSTFAQGFVALGSFRLSYITFYALIAVAFVWVLWNKTRFGKNIFAIGGNPEAAKVSGVNVGLNLLMIYALSGVFYAFGGMLEAGRIGSATNNLGFMYELDAIAACVVGGVSFSGGVGTVIGVVTGVIIFTVINYGLTYIGVNPYWQYIIKGAIIIFAVALDSLKYARKK.

Topologically, residues 1–16 (MSALNKKSFLTYLKEG) are periplasmic. Residues 17-37 (GIYVVLLVLLAIIIFQDPTFL) form a helical membrane-spanning segment. Residues 38 to 52 (SLLNLSNILTQSSVR) lie on the Cytoplasmic side of the membrane. The chain crosses the membrane as a helical span at residues 53–73 (IIIALGVAGLIVTQGTDLSAG). The Periplasmic segment spans residues 74–106 (RQVGLAAVVAATLLQSMDNANKVFPEMATMPIA). Helical transmembrane passes span 107-127 (LVIL…GLII) and 128-148 (AYLN…VYGI). Topologically, residues 149-180 (NSLYYDFVGASPISGFDSGFSTFAQGFVALGS) are periplasmic. The helical transmembrane segment at 181-201 (FRLSYITFYALIAVAFVWVLW) threads the bilayer. Over 202-226 (NKTRFGKNIFAIGGNPEAAKVSGVN) the chain is Cytoplasmic. A helical membrane pass occupies residues 227 to 247 (VGLNLLMIYALSGVFYAFGGM). The Periplasmic segment spans residues 248–256 (LEAGRIGSA). A helical transmembrane segment spans residues 257–277 (TNNLGFMYELDAIAACVVGGV). A topological domain (cytoplasmic) is located at residue S278. Residues 279 to 299 (FSGGVGTVIGVVTGVIIFTVI) traverse the membrane as a helical segment. Over 300-305 (NYGLTY) the chain is Periplasmic. Residues 306-326 (IGVNPYWQYIIKGAIIIFAVA) form a helical membrane-spanning segment. Residues 327 to 336 (LDSLKYARKK) are Cytoplasmic-facing.

It belongs to the binding-protein-dependent transport system permease family. AraH/RbsC subfamily. The complex is composed of one ATP-binding protein (MglA), two transmembrane proteins (MglC) and a solute-binding protein (MglB).

Its subcellular location is the cell inner membrane. Functionally, part of the ABC transporter complex MglABC involved in galactose/methyl galactoside import. Probably responsible for the translocation of the substrate across the membrane. The chain is Galactose/methyl galactoside import permease protein MglC (mglC) from Escherichia coli (strain K12).